Here is a 188-residue protein sequence, read N- to C-terminus: Cell division protein ZapC (188 aa).

This sequence belongs to the ZapC family. Interacts directly with FtsZ.

The protein localises to the cytoplasm. Contributes to the efficiency of the cell division process by stabilizing the polymeric form of the cell division protein FtsZ. Acts by promoting interactions between FtsZ protofilaments and suppressing the GTPase activity of FtsZ. This is Cell division protein ZapC from Psychromonas ingrahamii (strain DSM 17664 / CCUG 51855 / 37).